The following is a 160-amino-acid chain: Small ribosomal subunit protein uS19v (160 aa).

It belongs to the universal ribosomal protein uS19 family.

The protein localises to the cytoplasm. The chain is Small ribosomal subunit protein uS19v (RPS15F) from Arabidopsis thaliana (Mouse-ear cress).